A 294-amino-acid chain; its full sequence is Nucleotide-binding protein CLL_A3342 (294 aa).

8-15 (GLSGAGKT) provides a ligand contact to ATP. 59-62 (DIRG) lines the GTP pocket.

Belongs to the RapZ-like family.

Functionally, displays ATPase and GTPase activities. The sequence is that of Nucleotide-binding protein CLL_A3342 from Clostridium botulinum (strain Eklund 17B / Type B).